Reading from the N-terminus, the 388-residue chain is uncharacterized protein (388 aa).

The protein belongs to the glycosyltransferase 28 family.

This is an uncharacterized protein from Methanosarcina acetivorans (strain ATCC 35395 / DSM 2834 / JCM 12185 / C2A).